The following is a 386-amino-acid chain: Protein-glutamate methylesterase/protein-glutamine glutaminase (386 aa).

The Response regulatory domain maps to 4 to 121 (KVLVVDDSAF…ARNRDEAVKT (118 aa)). Asp55 is modified (4-aspartylphosphate). The segment at 133-161 (PVSRTSARASTPPPVAKQPERSSEPTTAL) is disordered. In terms of domain architecture, CheB-type methylesterase spans 190–384 (INRAYQLLAI…KAIMKEVGYS (195 aa)). Catalysis depends on residues Ser202, His229, and Asp326.

This sequence belongs to the CheB family. Post-translationally, phosphorylated by CheA. Phosphorylation of the N-terminal regulatory domain activates the methylesterase activity.

Its subcellular location is the cytoplasm. The enzyme catalyses [protein]-L-glutamate 5-O-methyl ester + H2O = L-glutamyl-[protein] + methanol + H(+). The catalysed reaction is L-glutaminyl-[protein] + H2O = L-glutamyl-[protein] + NH4(+). Its function is as follows. Involved in chemotaxis. Part of a chemotaxis signal transduction system that modulates chemotaxis in response to various stimuli. Catalyzes the demethylation of specific methylglutamate residues introduced into the chemoreceptors (methyl-accepting chemotaxis proteins or MCP) by CheR. Also mediates the irreversible deamidation of specific glutamine residues to glutamic acid. The protein is Protein-glutamate methylesterase/protein-glutamine glutaminase of Idiomarina loihiensis (strain ATCC BAA-735 / DSM 15497 / L2-TR).